We begin with the raw amino-acid sequence, 435 residues long: Membrane-bound ghrelin O-acyltransferase MBOAT4 (435 aa).

The Lumenal segment spans residues 1-5 (MDWLQ). A helical transmembrane segment spans residues 6-26 (LFFLHPLSFYQGAAFPFALLF). At 27–40 (NYLCILDTFSTRAR) the chain is on the cytoplasmic side. Residues 41-56 (YLFLLAGGGVLAFAAM) traverse the membrane as a helical segment. Residues 57–59 (GPY) are Lumenal-facing. The helical transmembrane segment at 60–76 (SLLIFIPALCAVALVSF) threads the bilayer. Topologically, residues 77-82 (LSPQEV) are cytoplasmic. The helical transmembrane segment at 83-101 (HRLTFFFQMGWQTLCHLGL) threads the bilayer. The Lumenal portion of the chain corresponds to 102-120 (HYTEYYLGEPPPVRFYITL). Residues 121-136 (SSLMLLTQRVTSLSLD) traverse the membrane as a helical segment. Topologically, residues 137-206 (ICEGKVEAPR…YPSISFRALT (70 aa)) are cytoplasmic. The chain crosses the membrane as a helical span at residues 207-227 (WRGLQILGLECLKVALRSAVS). Residues 228-240 (AGAGLDDCQRLEC) lie on the Lumenal side of the membrane. The chain crosses the membrane as a helical span at residues 241–261 (IYLMWSTAWLFKLTYYSHWIL). Residues 262-324 (DDSLLHAAGF…RRLVFRKSRR (63 aa)) lie on the Cytoplasmic side of the membrane. Catalysis depends on residues Asn307 and His338. Residues 325 to 338 (WPLLQTFAFSAWWH) form a helical membrane-spanning segment. Residues 339–340 (GL) are Lumenal-facing. Residues 341 to 357 (HPGQVFGFLCWSVMVKA) form a helical membrane-spanning segment. The Cytoplasmic portion of the chain corresponds to 358–376 (DYLIHTFANVCIRSWPLRL). A helical transmembrane segment spans residues 377–397 (LYRALTWAHTQLIIAYIMLAV). Topologically, residues 398-407 (EGRSLSSLCQ) are lumenal. The chain crosses the membrane as a helical span at residues 408-428 (LCCSYNSLFPVMYGLLLFLLA). Topologically, residues 429–435 (ERKDKRN) are cytoplasmic.

Belongs to the membrane-bound acyltransferase family. In terms of assembly, monomer. Post-translationally, not glycosylated. Highly expressed in stomach and pancreas. Lower expression in small intestine and colon. Very low expression in testis.

It localises to the endoplasmic reticulum membrane. It carries out the reaction octanoyl-CoA + L-seryl-[protein] = O-octanoyl-L-seryl-[protein] + CoA. It catalyses the reaction hexanoyl-CoA + L-seryl-[protein] = O-hexanoyl-L-seryl-[protein] + CoA. The catalysed reaction is decanoyl-CoA + L-seryl-[protein] = O-decanoyl-L-seryl-[protein] + CoA. The enzyme catalyses L-seryl-[protein] + acetyl-CoA = O-acetyl-L-seryl-[protein] + CoA. It carries out the reaction L-seryl-[protein] + butanoyl-CoA = O-butanoyl-L-seryl-[protein] + CoA. It catalyses the reaction pentanoyl-CoA + L-seryl-[protein] = O-pentanoyl-L-seryl-[protein] + CoA. The catalysed reaction is heptanoyl-CoA + L-seryl-[protein] = O-heptanoyl-L-seryl-[protein] + CoA. The enzyme catalyses nonanoyl-CoA + L-seryl-[protein] = O-nonanoyl-L-seryl-[protein] + CoA. It carries out the reaction L-seryl-[protein] + dodecanoyl-CoA = O-dodecanoyl-L-seryl-[protein] + CoA. It catalyses the reaction L-seryl-[protein] + tetradecanoyl-CoA = O-tetradecanoyl-L-seryl-[protein] + CoA. The catalysed reaction is a fatty acyl-CoA + L-seryl-[protein] = O-fatty acyl-L-seryl-[protein] + CoA. With respect to regulation, inhibited by 1-[2-cyano-3,12-dioxooleana-1,9(11)- dien-28-oyl]ethylamide (CDDO-EA) with an IC(50) of 60 uM. Inhibited by Fe3+ and Cu2+ and the O-acyltransferase activity is completely blocked over 5 mM Fe3+ and 0.5 mM Cu2+. Its function is as follows. Catalyzes ghrelin acylation at 'Ser-3' using preferentially octanoyl-CoA, hexanoyl-CoA and decanoyl-CoA as acyl-CoA donors leading to ghrelin activity. In vitro also uses acyl-CoA donors of different lengths from short-chain (C2) to long-chain fatty acids (C16) knowing that acyl-CoA donors from butanoyl-CoA (C4) to dodecanoyl-CoA (C12) are more efficient compared to longer acyl-CoA donors, such as myristoyl-CoA (C14) and palmitoyl-CoA (C16) that are not efficient. Functionally, inactive octanoyltransferase activity. This Mus musculus (Mouse) protein is Membrane-bound ghrelin O-acyltransferase MBOAT4.